Here is a 120-residue protein sequence, read N- to C-terminus: MGVFSFVCKSKGGEWTAKQHEGDLEASASSTYDLQRKLVQTALSADSSGGVQSSFSLVSPTSAVFVVVIGGGGGGGFAAGGGAAAGGGGGGEAAAATKEEEKKKEESEEEEGDFGFDLFG.

Over residues 81–92 (GGAAAGGGGGGE) the composition is skewed to gly residues. The tract at residues 81-120 (GGAAAGGGGGGEAAAATKEEEKKKEESEEEEGDFGFDLFG) is disordered. The segment covering 97 to 106 (TKEEEKKKEE) has biased composition (basic and acidic residues).

It belongs to the eukaryotic ribosomal protein P1/P2 family.

In terms of biological role, plays an important role in the elongation step of protein synthesis. This is Large ribosomal subunit protein P3y (RPP3B) from Arabidopsis thaliana (Mouse-ear cress).